The sequence spans 598 residues: Glutamine--fructose-6-phosphate aminotransferase [isomerizing] (598 aa).

The active-site Nucleophile; for GATase activity is the C2. In terms of domain architecture, Glutamine amidotransferase type-2 spans 2–219; that stretch reads CGIIGYIGPR…DGEYGIVSKD (218 aa). SIS domains lie at 280 to 420 and 449 to 588; these read VAEL…LVGI and IAVK…PDRP. K593 acts as the For Fru-6P isomerization activity in catalysis.

As to quaternary structure, homodimer.

Its subcellular location is the cytoplasm. It catalyses the reaction D-fructose 6-phosphate + L-glutamine = D-glucosamine 6-phosphate + L-glutamate. Functionally, catalyzes the first step in hexosamine metabolism, converting fructose-6P into glucosamine-6P using glutamine as a nitrogen source. The polypeptide is Glutamine--fructose-6-phosphate aminotransferase [isomerizing] (Pyrococcus horikoshii (strain ATCC 700860 / DSM 12428 / JCM 9974 / NBRC 100139 / OT-3)).